The following is a 194-amino-acid chain: Segregation and condensation protein B (194 aa).

Belongs to the ScpB family. As to quaternary structure, homodimer. Homodimerization may be required to stabilize the binding of ScpA to the Smc head domains. Component of a cohesin-like complex composed of ScpA, ScpB and the Smc homodimer, in which ScpA and ScpB bind to the head domain of Smc. The presence of the three proteins is required for the association of the complex with DNA.

The protein localises to the cytoplasm. In terms of biological role, participates in chromosomal partition during cell division. May act via the formation of a condensin-like complex containing Smc and ScpA that pull DNA away from mid-cell into both cell halves. The protein is Segregation and condensation protein B of Streptococcus agalactiae serotype Ia (strain ATCC 27591 / A909 / CDC SS700).